Reading from the N-terminus, the 130-residue chain is MAKTAKKSGPKKAKRNVPNGVAHIQSTFNNTIVSISDTAGEIIAWSSAGASGFKGARKGTPFAAQTAAEAAARRALEQGMRQIEVLVRGPGSGRETAIRALQVAGLEITLIRDVTPLPHNGCRRPKRRRV.

The protein belongs to the universal ribosomal protein uS11 family. Part of the 30S ribosomal subunit. Interacts with proteins S7 and S18. Binds to IF-3.

In terms of biological role, located on the platform of the 30S subunit, it bridges several disparate RNA helices of the 16S rRNA. Forms part of the Shine-Dalgarno cleft in the 70S ribosome. This is Small ribosomal subunit protein uS11 from Synechococcus sp. (strain CC9902).